Here is a 481-residue protein sequence, read N- to C-terminus: Glutamine synthetase (481 aa).

The 85-residue stretch at 22-106 (NEVEFVDFRF…VFCDVYDVYK (85 aa)) folds into the GS beta-grasp domain. Residues 114 to 481 (PRSIAKKALQ…PFEFITTYSC (368 aa)) form the GS catalytic domain. Positions 139, 141, 223, and 230 each coordinate Mg(2+). Residues 274–275 (NG) and Gly-275 each bind L-glutamate. His-279 lines the Mg(2+) pocket. ATP contacts are provided by residues 281–283 (HVS) and Ser-283. The L-glutamate site is built by Arg-331, Glu-337, and Arg-349. ATP contacts are provided by Arg-349 and Arg-354. A Mg(2+)-binding site is contributed by Glu-367. Arg-369 contributes to the L-glutamate binding site.

This sequence belongs to the glutamine synthetase family. In terms of assembly, oligomer of 12 subunits arranged in the form of two hexameric ring. It depends on Mg(2+) as a cofactor.

The protein localises to the cytoplasm. It catalyses the reaction L-glutamate + NH4(+) + ATP = L-glutamine + ADP + phosphate + H(+). With respect to regulation, the activity of this enzyme could be controlled by adenylation under conditions of abundant glutamine. In terms of biological role, catalyzes the ATP-dependent biosynthesis of glutamine from glutamate and ammonia. This Helicobacter pylori (strain ATCC 700392 / 26695) (Campylobacter pylori) protein is Glutamine synthetase.